A 198-amino-acid polypeptide reads, in one-letter code: Holliday junction branch migration complex subunit RuvA (198 aa).

Residues 1-64 (MIAHLRGTLL…EDAIALFGFL (64 aa)) form a domain I region. A domain II region spans residues 65 to 141 (DREEKRLFER…LDDLIAAAPA (77 aa)). Residues 141 to 145 (AAGPV) are flexible linker. Residues 146–198 (AAGPAAEDVLSALLNLGYQRPAALKAIETAVEKDAAAGEDFDLLFRAALKLIR) form a domain III region.

The protein belongs to the RuvA family. As to quaternary structure, homotetramer. Forms an RuvA(8)-RuvB(12)-Holliday junction (HJ) complex. HJ DNA is sandwiched between 2 RuvA tetramers; dsDNA enters through RuvA and exits via RuvB. An RuvB hexamer assembles on each DNA strand where it exits the tetramer. Each RuvB hexamer is contacted by two RuvA subunits (via domain III) on 2 adjacent RuvB subunits; this complex drives branch migration. In the full resolvosome a probable DNA-RuvA(4)-RuvB(12)-RuvC(2) complex forms which resolves the HJ.

The protein resides in the cytoplasm. Functionally, the RuvA-RuvB-RuvC complex processes Holliday junction (HJ) DNA during genetic recombination and DNA repair, while the RuvA-RuvB complex plays an important role in the rescue of blocked DNA replication forks via replication fork reversal (RFR). RuvA specifically binds to HJ cruciform DNA, conferring on it an open structure. The RuvB hexamer acts as an ATP-dependent pump, pulling dsDNA into and through the RuvAB complex. HJ branch migration allows RuvC to scan DNA until it finds its consensus sequence, where it cleaves and resolves the cruciform DNA. This chain is Holliday junction branch migration complex subunit RuvA, found in Acidobacterium capsulatum (strain ATCC 51196 / DSM 11244 / BCRC 80197 / JCM 7670 / NBRC 15755 / NCIMB 13165 / 161).